Consider the following 71-residue polypeptide: Ranatuerin-2PLa (71 aa).

Positions 1–22 (MFTTKKSMLLFFFLGTISLSLC) are cleaved as a signal peptide. A propeptide spanning residues 23–41 (EQERGADEDDGVEMTEEEV) is cleaved from the precursor. Cys-66 and Cys-71 are oxidised to a cystine.

As to expression, expressed by the skin glands.

It is found in the secreted. May have antimicrobial activity against the Gram-negative bacterium E.coli. The chain is Ranatuerin-2PLa from Lithobates palustris (Pickerel frog).